The following is a 330-amino-acid chain: N-acetyl-gamma-glutamyl-phosphate reductase (330 aa).

Residue cysteine 155 is part of the active site.

This sequence belongs to the NAGSA dehydrogenase family. Type 1 subfamily.

Its subcellular location is the cytoplasm. The catalysed reaction is N-acetyl-L-glutamate 5-semialdehyde + phosphate + NADP(+) = N-acetyl-L-glutamyl 5-phosphate + NADPH + H(+). It participates in amino-acid biosynthesis; L-arginine biosynthesis; N(2)-acetyl-L-ornithine from L-glutamate: step 3/4. In terms of biological role, catalyzes the NADPH-dependent reduction of N-acetyl-5-glutamyl phosphate to yield N-acetyl-L-glutamate 5-semialdehyde. This Shewanella halifaxensis (strain HAW-EB4) protein is N-acetyl-gamma-glutamyl-phosphate reductase.